The following is a 282-amino-acid chain: Undecaprenyl-diphosphatase (282 aa).

7 helical membrane-spanning segments follow: residues 45–65 (AFME…VVFI), 86–106 (WQLW…GIPL), 114–134 (FHNF…FILI), 151–171 (LPYK…FPGT), 196–216 (FFLG…KFIL), 224–244 (GQLT…MYVI), and 256–276 (FTVF…YWVF).

Belongs to the UppP family.

The protein localises to the cell membrane. It carries out the reaction di-trans,octa-cis-undecaprenyl diphosphate + H2O = di-trans,octa-cis-undecaprenyl phosphate + phosphate + H(+). Its function is as follows. Catalyzes the dephosphorylation of undecaprenyl diphosphate (UPP). Confers resistance to bacitracin. The polypeptide is Undecaprenyl-diphosphatase (Streptococcus gordonii (strain Challis / ATCC 35105 / BCRC 15272 / CH1 / DL1 / V288)).